Consider the following 589-residue polypeptide: Arginine--tRNA ligase (589 aa).

The 'HIGH' region signature appears at 131-141; sequence ANPTGPLHVGH.

Belongs to the class-I aminoacyl-tRNA synthetase family. As to quaternary structure, monomer.

It localises to the cytoplasm. It catalyses the reaction tRNA(Arg) + L-arginine + ATP = L-arginyl-tRNA(Arg) + AMP + diphosphate. This chain is Arginine--tRNA ligase, found in Legionella pneumophila (strain Paris).